The primary structure comprises 277 residues: Putative hydro-lyase BP1875 (277 aa).

It belongs to the D-glutamate cyclase family.

In Bordetella pertussis (strain Tohama I / ATCC BAA-589 / NCTC 13251), this protein is Putative hydro-lyase BP1875.